Here is a 417-residue protein sequence, read N- to C-terminus: RH-like protein (417 aa).

11 helical membrane passes run 12–32 (CLPLWALTLEAALILLFFFFT), 44–64 (LVASYQVCQDLTVMAVLGLGF), 77–97 (VAFNLFLLALGVQWAILLDGF), 125–145 (ISMNAVLGKVNLAQLVVMELV), 172–192 (IHVFAAYFGLTVAWCLPKPLP), 203–223 (TSPSLFAMLGTLFLWMFWPTF), 238–258 (VFSTYYALAVSAVTAISVSSL), 265–285 (INMTYMPNAGLAGGVAVGASC), 287–307 (VIHSPWIAMVLGLVAGLISFG), 331–351 (TFGLPALLGEITYIVLMALRV), and 358–378 (MIGFQVLLSTGTLSLAMAMSI).

Belongs to the ammonium transporter (TC 2.A.49) family. Rh subfamily.

It is found in the membrane. Its function is as follows. May be part of an oligomeric complex which is likely to have a transport or channel function in the erythrocyte membrane. The protein is RH-like protein of Macaca fascicularis (Crab-eating macaque).